Here is a 503-residue protein sequence, read N- to C-terminus: Variant surface glycoprotein AnTaT 1.1 (503 aa).

Residues 1-29 (MVTKERNAALKIVMLVASALTLHPQQALA) form the signal peptide. 2 disulfide bridges follow: Cys45–Cys172 and Cys154–Cys209. Asn113 carries N-linked (GlcNAc...) asparagine glycosylation. 2 N-linked (GlcNAc...) asparagine glycosylation sites follow: Asn419 and Asn432. Residue Asp480 is the site of GPI-anchor amidated aspartate attachment. Positions 481-503 (SSILLTKNFALSVVSAALVALLF) are cleaved as a propeptide — removed in mature form.

It is found in the cell membrane. VSG forms a coat on the surface of the parasite. The trypanosome evades the immune response of the host by expressing a series of antigenically distinct VSGs from an estimated 1000 VSG genes. The protein is Variant surface glycoprotein AnTaT 1.1 of Trypanosoma brucei brucei.